A 257-amino-acid chain; its full sequence is S-methyl-5'-thioadenosine phosphorylase (257 aa).

Residues Ser-10 and 50–51 (RH) each bind phosphate. Residue Met-180 participates in substrate binding. Thr-181 contacts phosphate. Residue 204–206 (DYD) coordinates substrate.

Belongs to the PNP/MTAP phosphorylase family. MTAP subfamily. In terms of assembly, homohexamer. Dimer of a homotrimer.

It catalyses the reaction S-methyl-5'-thioadenosine + phosphate = 5-(methylsulfanyl)-alpha-D-ribose 1-phosphate + adenine. The protein operates within amino-acid biosynthesis; L-methionine biosynthesis via salvage pathway; S-methyl-5-thio-alpha-D-ribose 1-phosphate from S-methyl-5'-thioadenosine (phosphorylase route): step 1/1. Functionally, catalyzes the reversible phosphorylation of S-methyl-5'-thioadenosine (MTA) to adenine and 5-methylthioribose-1-phosphate. Involved in the breakdown of MTA, a major by-product of polyamine biosynthesis. Responsible for the first step in the methionine salvage pathway after MTA has been generated from S-adenosylmethionine. Has broad substrate specificity with 6-aminopurine nucleosides as preferred substrates. The sequence is that of S-methyl-5'-thioadenosine phosphorylase (mntP) from Pyrococcus abyssi (strain GE5 / Orsay).